The sequence spans 373 residues: Histidinol-phosphate aminotransferase (373 aa).

Lysine 231 is subject to N6-(pyridoxal phosphate)lysine.

The protein belongs to the class-II pyridoxal-phosphate-dependent aminotransferase family. Histidinol-phosphate aminotransferase subfamily. Pyridoxal 5'-phosphate is required as a cofactor.

The enzyme catalyses L-histidinol phosphate + 2-oxoglutarate = 3-(imidazol-4-yl)-2-oxopropyl phosphate + L-glutamate. It functions in the pathway amino-acid biosynthesis; L-histidine biosynthesis; L-histidine from 5-phospho-alpha-D-ribose 1-diphosphate: step 7/9. The protein is Histidinol-phosphate aminotransferase (hisC) of Methanocaldococcus jannaschii (strain ATCC 43067 / DSM 2661 / JAL-1 / JCM 10045 / NBRC 100440) (Methanococcus jannaschii).